Reading from the N-terminus, the 434-residue chain is ATP-dependent protease ATPase subunit HslU (434 aa).

ATP contacts are provided by residues I18, 60-65 (GVGKTE), D247, E312, and R384.

It belongs to the ClpX chaperone family. HslU subfamily. As to quaternary structure, a double ring-shaped homohexamer of HslV is capped on each side by a ring-shaped HslU homohexamer. The assembly of the HslU/HslV complex is dependent on binding of ATP.

It is found in the cytoplasm. Functionally, ATPase subunit of a proteasome-like degradation complex; this subunit has chaperone activity. The binding of ATP and its subsequent hydrolysis by HslU are essential for unfolding of protein substrates subsequently hydrolyzed by HslV. HslU recognizes the N-terminal part of its protein substrates and unfolds these before they are guided to HslV for hydrolysis. The protein is ATP-dependent protease ATPase subunit HslU of Brucella anthropi (strain ATCC 49188 / DSM 6882 / CCUG 24695 / JCM 21032 / LMG 3331 / NBRC 15819 / NCTC 12168 / Alc 37) (Ochrobactrum anthropi).